Consider the following 123-residue polypeptide: Small ribosomal subunit protein uS13 (123 aa).

The disordered stretch occupies residues 93–123 (RRNLPVRGQKTKTNARTRKGPKRAIGGKKKK).

This sequence belongs to the universal ribosomal protein uS13 family. In terms of assembly, part of the 30S ribosomal subunit. Forms a loose heterodimer with protein S19. Forms two bridges to the 50S subunit in the 70S ribosome.

Located at the top of the head of the 30S subunit, it contacts several helices of the 16S rRNA. In the 70S ribosome it contacts the 23S rRNA (bridge B1a) and protein L5 of the 50S subunit (bridge B1b), connecting the 2 subunits; these bridges are implicated in subunit movement. Contacts the tRNAs in the A and P-sites. This Clostridium botulinum (strain Loch Maree / Type A3) protein is Small ribosomal subunit protein uS13.